The chain runs to 139 residues: Large ribosomal subunit protein uL13 (139 aa).

This sequence belongs to the universal ribosomal protein uL13 family. In terms of assembly, part of the 50S ribosomal subunit.

Functionally, this protein is one of the early assembly proteins of the 50S ribosomal subunit, although it is not seen to bind rRNA by itself. It is important during the early stages of 50S assembly. This is Large ribosomal subunit protein uL13 from Methanococcoides burtonii (strain DSM 6242 / NBRC 107633 / OCM 468 / ACE-M).